We begin with the raw amino-acid sequence, 158 residues long: Peroxidase (158 aa).

P2 serves as a coordination point for substrate. Residue H32 participates in heme b binding. T33 is a Ca(2+) binding site. Cysteines 39 and 64 form a disulfide. An N-linked (GlcNAc...) asparagine glycan is attached at N48. 3 residues coordinate Ca(2+): D78, T81, and D86.

It belongs to the peroxidase family. Classical plant (class III) peroxidase subfamily. The cofactor is Ca(2+). It depends on heme b as a cofactor.

It carries out the reaction 2 a phenolic donor + H2O2 = 2 a phenolic radical donor + 2 H2O. In terms of biological role, removal of H(2)O(2), oxidation of toxic reductants, biosynthesis and degradation of lignin, suberization, auxin catabolism, response to environmental stresses such as wounding, pathogen attack and oxidative stress. These functions might be dependent on each isozyme/isoform in each plant tissue. The chain is Peroxidase from Lupinus polyphyllus (Large-leaved lupine).